The sequence spans 164 residues: Protein-export protein SecB (164 aa).

This sequence belongs to the SecB family. Homotetramer, a dimer of dimers. One homotetramer interacts with 1 SecA dimer.

The protein resides in the cytoplasm. Its function is as follows. One of the proteins required for the normal export of preproteins out of the cell cytoplasm. It is a molecular chaperone that binds to a subset of precursor proteins, maintaining them in a translocation-competent state. It also specifically binds to its receptor SecA. In Orientia tsutsugamushi (strain Ikeda) (Rickettsia tsutsugamushi), this protein is Protein-export protein SecB.